Consider the following 110-residue polypeptide: Large ribosomal subunit protein P2C (110 aa).

The tract at residues 83–110 is disordered; it reads APAAEEAAKEEAKEEEESDEDMGFGLFD. Over residues 95–104 the composition is skewed to acidic residues; that stretch reads KEEEESDEDM. Residue S100 is modified to Phosphoserine.

This sequence belongs to the eukaryotic ribosomal protein P1/P2 family. Component of the large ribosomal subunit (LSU). Mature yeast ribosomes consist of a small (40S) and a large (60S) subunit. The 40S small subunit contains 1 molecule of ribosomal RNA (18S rRNA) and at least 33 different proteins. The large 60S subunit contains 3 rRNA molecules (25S, 5.8S and 5S rRNA) and at least 46 different proteins. The acidic ribosomal P-proteins form the stalk structure of the 60S subunit. They are organized as a pentameric complex in which uL10/P0 interacts with 2 heterodimers of P1 and P2 proteins.

Its subcellular location is the cytoplasm. Component of the ribosome, a large ribonucleoprotein complex responsible for the synthesis of proteins in the cell. The small ribosomal subunit (SSU) binds messenger RNAs (mRNAs) and translates the encoded message by selecting cognate aminoacyl-transfer RNA (tRNA) molecules. The large subunit (LSU) contains the ribosomal catalytic site termed the peptidyl transferase center (PTC), which catalyzes the formation of peptide bonds, thereby polymerizing the amino acids delivered by tRNAs into a polypeptide chain. The nascent polypeptides leave the ribosome through a tunnel in the LSU and interact with protein factors that function in enzymatic processing, targeting, and the membrane insertion of nascent chains at the exit of the ribosomal tunnel. This chain is Large ribosomal subunit protein P2C (rpp203), found in Schizosaccharomyces pombe (strain 972 / ATCC 24843) (Fission yeast).